Consider the following 197-residue polypeptide: Ribosomal RNA large subunit methyltransferase E (197 aa).

Positions 50, 52, 67, 83, and 111 each coordinate S-adenosyl-L-methionine. K151 functions as the Proton acceptor in the catalytic mechanism.

The protein belongs to the class I-like SAM-binding methyltransferase superfamily. RNA methyltransferase RlmE family.

It is found in the cytoplasm. It catalyses the reaction uridine(2552) in 23S rRNA + S-adenosyl-L-methionine = 2'-O-methyluridine(2552) in 23S rRNA + S-adenosyl-L-homocysteine + H(+). Functionally, specifically methylates the uridine in position 2552 of 23S rRNA at the 2'-O position of the ribose in the fully assembled 50S ribosomal subunit. The sequence is that of Ribosomal RNA large subunit methyltransferase E from Thermoplasma volcanium (strain ATCC 51530 / DSM 4299 / JCM 9571 / NBRC 15438 / GSS1).